The primary structure comprises 255 residues: Electron transfer flavoprotein beta subunit lysine methyltransferase (255 aa).

A mitochondrion-targeting transit peptide spans 1 to 32; it reads MAFSLCWKAPRSQWSFLQALNSGFPLFPWRTV.

The protein belongs to the methyltransferase superfamily. ETFBKMT family. As to quaternary structure, interacts with HSPD1; this protein may possibly be a methylation substrate.

It is found in the cytoplasm. It localises to the mitochondrion matrix. It carries out the reaction L-lysyl-[protein] + 3 S-adenosyl-L-methionine = N(6),N(6),N(6)-trimethyl-L-lysyl-[protein] + 3 S-adenosyl-L-homocysteine + 3 H(+). Functionally, protein-lysine methyltransferase that selectively trimethylates the flavoprotein ETFB in mitochondria. Thereby, may negatively regulate the function of ETFB in electron transfer from Acyl-CoA dehydrogenases to the main respiratory chain. This chain is Electron transfer flavoprotein beta subunit lysine methyltransferase, found in Rattus norvegicus (Rat).